The chain runs to 101 residues: Putative pterin-4-alpha-carbinolamine dehydratase (101 aa).

The protein belongs to the pterin-4-alpha-carbinolamine dehydratase family.

The catalysed reaction is (4aS,6R)-4a-hydroxy-L-erythro-5,6,7,8-tetrahydrobiopterin = (6R)-L-erythro-6,7-dihydrobiopterin + H2O. This is Putative pterin-4-alpha-carbinolamine dehydratase from Rhizobium leguminosarum bv. trifolii (strain WSM2304).